Here is a 181-residue protein sequence, read N- to C-terminus: Large ribosomal subunit protein uL5 (181 aa).

The protein belongs to the universal ribosomal protein uL5 family. In terms of assembly, part of the 50S ribosomal subunit; contacts the 5S rRNA and probably tRNA. Forms a bridge to the 30S subunit in the 70S ribosome.

This is one of the proteins that bind and probably mediate the attachment of the 5S RNA into the large ribosomal subunit, where it forms part of the central protuberance. In the 70S ribosome it contacts protein S13 of the 30S subunit (bridge B1b), connecting the 2 subunits; this bridge is implicated in subunit movement. May contact the P site tRNA; the 5S rRNA and some of its associated proteins might help stabilize positioning of ribosome-bound tRNAs. This Methanococcus maripaludis (strain C6 / ATCC BAA-1332) protein is Large ribosomal subunit protein uL5.